We begin with the raw amino-acid sequence, 181 residues long: ATP synthase subunit b (181 aa).

The chain crosses the membrane as a helical span at residues 16–36 (LIPPIPELVIGLIAFVIVFGF).

The protein belongs to the ATPase B chain family. As to quaternary structure, F-type ATPases have 2 components, F(1) - the catalytic core - and F(0) - the membrane proton channel. F(1) has five subunits: alpha(3), beta(3), gamma(1), delta(1), epsilon(1). F(0) has three main subunits: a(1), b(2) and c(10-14). The alpha and beta chains form an alternating ring which encloses part of the gamma chain. F(1) is attached to F(0) by a central stalk formed by the gamma and epsilon chains, while a peripheral stalk is formed by the delta and b chains.

The protein localises to the cell membrane. F(1)F(0) ATP synthase produces ATP from ADP in the presence of a proton or sodium gradient. F-type ATPases consist of two structural domains, F(1) containing the extramembraneous catalytic core and F(0) containing the membrane proton channel, linked together by a central stalk and a peripheral stalk. During catalysis, ATP synthesis in the catalytic domain of F(1) is coupled via a rotary mechanism of the central stalk subunits to proton translocation. Its function is as follows. Component of the F(0) channel, it forms part of the peripheral stalk, linking F(1) to F(0). The sequence is that of ATP synthase subunit b from Streptomyces lividans.